We begin with the raw amino-acid sequence, 232 residues long: Small ribosomal subunit protein uS3 (232 aa).

Residues 39 to 107 (VRQYLTKELK…PAQINIAEVR (69 aa)) form the KH type-2 domain.

It belongs to the universal ribosomal protein uS3 family. Part of the 30S ribosomal subunit. Forms a tight complex with proteins S10 and S14.

Binds the lower part of the 30S subunit head. Binds mRNA in the 70S ribosome, positioning it for translation. The chain is Small ribosomal subunit protein uS3 from Aliivibrio salmonicida (strain LFI1238) (Vibrio salmonicida (strain LFI1238)).